Here is a 445-residue protein sequence, read N- to C-terminus: Glycine--tRNA ligase (445 aa).

The substrate site is built by arginine 97 and glutamate 145. Residues 177-179 (RNE), 187-192 (FRTCEF), 262-263 (EV), and 308-311 (GLTR) contribute to the ATP site. 192 to 196 (FEQME) contributes to the substrate binding site. 304–308 (ETSAG) is a binding site for substrate.

This sequence belongs to the class-II aminoacyl-tRNA synthetase family. As to quaternary structure, homodimer.

It localises to the cytoplasm. It catalyses the reaction tRNA(Gly) + glycine + ATP = glycyl-tRNA(Gly) + AMP + diphosphate. Functionally, catalyzes the attachment of glycine to tRNA(Gly). This chain is Glycine--tRNA ligase, found in Borreliella burgdorferi (strain ATCC 35210 / DSM 4680 / CIP 102532 / B31) (Borrelia burgdorferi).